The primary structure comprises 262 residues: Phosphonates import ATP-binding protein PhnC (262 aa).

An ABC transporter domain is found at 5 to 253 (IRVEKLAKTF…RFDHLYRSIN (249 aa)). 37-44 (GPSGSGKS) contributes to the ATP binding site.

It belongs to the ABC transporter superfamily. Phosphonates importer (TC 3.A.1.9.1) family. In terms of assembly, the complex is composed of two ATP-binding proteins (PhnC), two transmembrane proteins (PhnE) and a solute-binding protein (PhnD).

The protein localises to the cell inner membrane. It catalyses the reaction phosphonate(out) + ATP + H2O = phosphonate(in) + ADP + phosphate + H(+). In terms of biological role, part of the ABC transporter complex PhnCDE involved in phosphonates import. Responsible for energy coupling to the transport system. The polypeptide is Phosphonates import ATP-binding protein PhnC (Shigella boydii serotype 4 (strain Sb227)).